The sequence spans 385 residues: MKFSIISVALASAITVDAHGYLTIPFSRTRLGAEAGLDTCPECSILEPVTAWPNVTEAKVGRSGPCGYNARVSIDYNQPATNWGNSPVVTYTAGDTVDVQWCVDHNGDHGGMFSYRICQDQELVNKFLTPGYLPTEAEKQAAEDCFEKGTLPCTDVNGQSCDFSPDCQQGQACWRNDWFTCNAFQADSRRGCQGVDNAALGSCFTTIAGGYTVTKKIKIPNYISGHTLLSFRWNSFQTAQVYLSCADIAIVGDSASTTKVSATATTLVTSSKTASASCTPAATVAVTFNHLASTSYGESIKIVGSISQLGSWSASSGVALSASQYTTSNPLWTATVSLPAGTKFEYKFVKVSSEGSAVTWESDPNRSYTVPQSCAESVAVESSWK.

The N-terminal stretch at 1–18 (MKFSIISVALASAITVDA) is a signal peptide. Position 19 (His19) interacts with Cu(2+). The residue at position 19 (His19) is a Methylhistidine. Residues 19-248 (HGYLTIPFSR…AQVYLSCADI (230 aa)) form the Chitin-binding type-4 domain. A disulfide bridge connects residues Cys40 and Cys43. Residue Asn54 is glycosylated (N-linked (GlcNAc...) asparagine). 6 disulfide bridges follow: Cys66–Cys245, Cys102–Cys203, Cys118–Cys145, Cys153–Cys161, Cys167–Cys173, and Cys181–Cys192. Residue His109 coordinates Cu(2+). A Cu(2+)-binding site is contributed by Tyr242. The CBM20 domain maps to 278–385 (CTPAATVAVT…ESVAVESSWK (108 aa)). The N-linked (GlcNAc...) asparagine glycan is linked to Asn365.

It belongs to the polysaccharide monooxygenase AA13 family. It depends on Cu(2+) as a cofactor.

The protein localises to the secreted. It carries out the reaction starch + reduced acceptor + O2 = D-glucono-1,5-lactone-terminated malto-oligosaccharides + short-chain malto-oligosaccharides + acceptor + H2O.. Functionally, starch-active lytic polysaccharide monooxygenase that oxidizes the C1 position of starch substrates, but not in cellulose or chitin. Catalysis by LPMOs requires the reduction of the active-site copper from Cu(II) to Cu(I) by a reducing agent and H(2)O(2) or O(2) as a cosubstrate. This is AA13 family lytic polysaccharide monooxygenase NCU08746 from Neurospora crassa (strain ATCC 24698 / 74-OR23-1A / CBS 708.71 / DSM 1257 / FGSC 987).